We begin with the raw amino-acid sequence, 115 residues long: Nucleoid-associated protein PMN2A_1347 (115 aa).

The disordered stretch occupies residues 89-115 (STSTMKERMEDLTGGFKLNLPGMGEEN).

The protein belongs to the YbaB/EbfC family. In terms of assembly, homodimer.

It localises to the cytoplasm. Its subcellular location is the nucleoid. Binds to DNA and alters its conformation. May be involved in regulation of gene expression, nucleoid organization and DNA protection. The protein is Nucleoid-associated protein PMN2A_1347 of Prochlorococcus marinus (strain NATL2A).